The following is a 263-amino-acid chain: Alpha-tubulin N-acetyltransferase 2 (263 aa).

Residues 1 to 181 (MEIAFDLSTI…NKYALCSNFF (181 aa)) enclose the N-acetyltransferase domain. 115–128 (FFVVPTEQRSGNGF) contributes to the acetyl-CoA binding site. Disordered regions lie at residues 191–223 (TPRQ…NRPR) and 242–263 (EVDP…RRIW). A compositionally biased stretch (low complexity) spans 200-212 (RASSAVSSHASSR). Positions 253-263 (NARDFGHRRIW) are enriched in basic and acidic residues.

This sequence belongs to the acetyltransferase ATAT1 family. In terms of tissue distribution, expressed in touch receptor neurons and in a subset of ciliated neurons, including PDE, ADE, CEP, and OLQ neurons.

The enzyme catalyses L-lysyl-[alpha-tubulin] + acetyl-CoA = N(6)-acetyl-L-lysyl-[alpha-tubulin] + CoA + H(+). Specifically acetylates 'Lys-40' in alpha-tubulin/mec-12 on the lumenal side of microtubules. Promotes microtubule destabilization and accelerates microtubule dynamics; this activity may be independent of acetylation activity. Acetylates alpha-tubulin with a slow enzymatic rate, due to a catalytic site that is not optimized for acetyl transfer. Enters the microtubule through each end and diffuses quickly throughout the lumen of microtubules. Acetylates only long/old microtubules because of its slow acetylation rate since it does not have time to act on dynamically unstable microtubules before the enzyme is released. Required for the maintenance of touch receptor neurons and possibly other type of neurons involved in locomotion. This chain is Alpha-tubulin N-acetyltransferase 2 (atat-2), found in Caenorhabditis elegans.